The primary structure comprises 208 residues: MKPLTARQQEVFDLIKAKIDDTGMPPTRAEIARELGFRSANAAEEHLKALARKQVIEIIPGASRGIRILLQDADDHDEELGVPLIGQVAAGEPILAQEHVESHYKVDPGMFKPQADFLLRVNGESMKDIGIMDGDLLAVHKTQDVRDGQVVVARVDDDVTVKRLERKGSMVFLHAENEEFSPIEVDLTSQSLSIEGLAVGVIRSTTWM.

The segment at residues 28–48 (RAEIARELGFRSANAAEEHLK) is a DNA-binding region (H-T-H motif). Catalysis depends on for autocatalytic cleavage activity residues serine 125 and lysine 162.

This sequence belongs to the peptidase S24 family. In terms of assembly, homodimer.

The catalysed reaction is Hydrolysis of Ala-|-Gly bond in repressor LexA.. Functionally, represses a number of genes involved in the response to DNA damage (SOS response), including recA and lexA. In the presence of single-stranded DNA, RecA interacts with LexA causing an autocatalytic cleavage which disrupts the DNA-binding part of LexA, leading to derepression of the SOS regulon and eventually DNA repair. This is LexA repressor from Aliivibrio fischeri (strain MJ11) (Vibrio fischeri).